The following is a 188-amino-acid chain: Elongation factor P (188 aa).

It belongs to the elongation factor P family.

The protein resides in the cytoplasm. Its pathway is protein biosynthesis; polypeptide chain elongation. Functionally, involved in peptide bond synthesis. Stimulates efficient translation and peptide-bond synthesis on native or reconstituted 70S ribosomes in vitro. Probably functions indirectly by altering the affinity of the ribosome for aminoacyl-tRNA, thus increasing their reactivity as acceptors for peptidyl transferase. This chain is Elongation factor P, found in Methylobacterium radiotolerans (strain ATCC 27329 / DSM 1819 / JCM 2831 / NBRC 15690 / NCIMB 10815 / 0-1).